The chain runs to 425 residues: Proline--tRNA ligase (425 aa).

It belongs to the class-II aminoacyl-tRNA synthetase family. ProS type 2 subfamily. In terms of assembly, homodimer.

The protein resides in the cytoplasm. It catalyses the reaction tRNA(Pro) + L-proline + ATP = L-prolyl-tRNA(Pro) + AMP + diphosphate. Its function is as follows. Catalyzes the attachment of proline to tRNA(Pro) in a two-step reaction: proline is first activated by ATP to form Pro-AMP and then transferred to the acceptor end of tRNA(Pro). The chain is Proline--tRNA ligase from Anaplasma marginale (strain St. Maries).